The following is a 1370-amino-acid chain: Zinc finger MYM-type protein 3 (1370 aa).

Composition is skewed to low complexity over residues 1 to 12 (MDPSDFPSPFDP) and 52 to 61 (PSSGALDLLD). Disordered regions lie at residues 1–72 (MDPS…DPGV) and 90–301 (PSPP…QRAG). A compositionally biased stretch (basic and acidic residues) spans 230–253 (ASEKPPERKRSERVRRAEPPKPEV). A phosphoserine mark is found at serine 263 and serine 267. Positions 263 to 279 (SDEDSDAMVDDPNDEDF) are enriched in acidic residues. Residues lysine 308, lysine 320, and lysine 328 each participate in a glycyl lysine isopeptide (Lys-Gly) (interchain with G-Cter in SUMO2) cross-link. MYM-type zinc fingers lie at residues 332-366 (QLFC…TKDS), 378-422 (HEFC…LHEV), 429-464 (HRLC…KTGS), 477-511 (KRFC…FEML), 521-559 (SLFC…PCYY), 567-604 (YQFC…KPEV), 612-646 (FQFC…HEKL), 653-692 (KSFC…GVTE), and 699-733 (WDFC…LETI). A Phosphoserine modification is found at serine 464. Polar residues predominate over residues 759-794 (NLDTQSGPESLLNSQSPESKPQTPSQTKVENSNTVR). A disordered region spans residues 759–830 (NLDTQSGPES…PPPPATPRKN (72 aa)). Residues lysine 778 and lysine 786 each participate in a glycyl lysine isopeptide (Lys-Gly) (interchain with G-Cter in SUMO2) cross-link. Threonine 795 is modified (phosphothreonine). Lysine 804 participates in a covalent cross-link: Glycyl lysine isopeptide (Lys-Gly) (interchain with G-Cter in SUMO2). Over residues 815 to 826 (APTPPPPPPPAT) the composition is skewed to pro residues. 2 positions are modified to phosphothreonine: threonine 817 and threonine 826. Glycyl lysine isopeptide (Lys-Gly) (interchain with G-Cter in SUMO2) cross-links involve residues lysine 847, lysine 861, lysine 920, and lysine 1275.

In terms of assembly, may be a component of a BHC histone deacetylase complex that contains HDAC1, HDAC2, HMG20B/BRAF35, KDM1A, RCOR1/CoREST, PHF21A/BHC80, ZMYM2, ZNF217, ZMYM3, GSE1 and GTF2I. In terms of tissue distribution, most abundant in brain, moderate in muscle and heart, low in other tissues except placenta.

The protein localises to the nucleus. In terms of biological role, plays a role in the regulation of cell morphology and cytoskeletal organization. This is Zinc finger MYM-type protein 3 (ZMYM3) from Homo sapiens (Human).